The following is a 1909-amino-acid chain: MVPNTCTSVPLLPVGLPLLLLLSCIQFSSQADSLPNFVRSPEDQTGISGGVASFVCQAAGEPKPRITWMKKGKKVSSQRFEVIEFDDGSGSVLRIQPLRTHRDEAIYECTATNSLGEINTSAKLTVLEENQIPHGFPTIDMGPQLKVVERTRTTTMLCAASGNPDPEITWFKDFLPVDINGNGRIKQLRSGALQIENSEESDQGKYECVATNSAGTRYSAPANLYVRVRRVPPRFSIPPTNHEVMPGGSVNLTCVAVGAPMPYVKWMTGEVELTKDEEMPVGRNVLELTNIRQSTNYTCVAISSLGMIEATAQVSVKALPKPPTSLTVTETTATSVTLTWDSGNPEPVSYYIIQYRAKTSDTNFQEVDGVATTRYSIGGLSPYSEYEFRVMAVNNIGRGPPSEPVETRTGEQAPSSPPLHVQARMLSASTMLVQWEPPEEPNGQIRGYRIYYTSDLDAPLSAWQKHNTDDSRLTTISSLTTGITYSLRVLGFTSVGDGPPSDVLQVKTQQGVPAQPSSFEAEAELDTRILLTWLWPVQDPIIKYELQYWEADSDNKIHVTFDPAGSYAVEGLKPDTLYKFSLAARSEMGQGVFTHPIEARTAQSAPSAPPQDVHLLSLSSTSIKVSWVAPPAASRHGAIVRYTVSYQAVNGEDTERHEVPDIGADASSCVLEGLEKWTEYQVWVRAHTDVGPGPESTAVRIRTNEDVPGAPPRKLEVEALNSTAIRVTWKPPLSGKQHGQIRGYQVIYSRLENGEPRGHPNIMDVALPEAQWKIEESTEYEAVIAGLASETSYSVTVAAYTTKGDGARSKAKVVTTTGAVPGKPTMIISTTVGNTALIQWQPPKDMVGELMGYRLRYKRLEEENYEIREFSRTDDHHTVTDLHKGATYSFHLSARNRAGLGEEYVKDIGTPEDVPSGFPLNLQVVGLTTSTTRLTWEPPALSERNGRIIHYIVVYRDINSKQNSTNRTSDTQMTIQGLRPDTTYDIRVQAFTSKGGGPISPSIQSRTMSTSPAFATSFGVKAVMKTSVLLTWEVPENYKSQVPFKILYNQQSVEVQGNLKRKLITRLQPDTDYSFVLMSRGNSAGGLQQQVSIRTAPDLFKTKPVLYTADQTNNGKLTINLPKVPTSAPVRCYYIVVVPVSQTSSRQWINPDEMELDELLESSEGAHLRRRRRHTDTVRPYIAAKLSTLPETFTLGDELDYSGFINRPLPNNQHFQCFVMAELKDQYPVTANEKQRTFSASPYSDPIIVQGENQMQRSVDQPEMLWVMGPVLAVVLIIIIVIAILLFKRKRASPLPKDDHSGGVKDCLLASSSDPVEMRRLNYQTPGMREHPPISVSELADHIERLKANDALRFSQEYESIDPGQQFTWENSNLEVNKPKNRYANVIAYDHSRVVLTPVDGVPGSDYINSNYIDGYRKQNAYIATQGPLPETLSDFWRMIWEQRASTIVMMTRLEEKSRVKCDQYWPIRGTETYGMIQVTMLDAVELATYSVRTFALYKNGSSEKREVRQFQFMAWPDHGVPEYPTPILAFLRRVKACNPPDAGPMVVHCSAGVGRTGCFIVIDAMLERMKHEKTVDIYGHVTCMRSQRNYMVQTEDQYIFIHEALLEAATCGNTEVPARNLYAHIQKLTQPSAGETVTAMELEFKRLANSKAHTSRFISANLPCNKFKNRLVNIMPFESTRVCLQPIRGVEGSDYINASCIDGYRQQKAYIATQGPLAETTEDFWRMLWEHNSTIVVMLTKLREMGREKCHQYWPAERSARYQYFVVDPMAEYNMPQYILREFKVTDARDGQSRTIRQFQFTDWPEQGVPKTGEGFIDFIGQVHKTKEQFGQDGPITVHCSAGVGRTGVFITLSIVLERMRYEGVVDLFQTVKTLRTQRPAMVQTEDQYQLCYRAALEYLGSFDHYAT.

A signal peptide spans 1–31 (MVPNTCTSVPLLPVGLPLLLLLSCIQFSSQA). Residues 32 to 1266 (DSLPNFVRSP…RSVDQPEMLW (1235 aa)) lie on the Extracellular side of the membrane. 3 Ig-like C2-type domains span residues 35-125 (PNFV…AKLT), 137-225 (PTID…ANLY), and 233-315 (PRFS…AQVS). The cysteines at positions 56 and 109 are disulfide-linked. 68-77 (WMKKGKKVSS) contacts heparin. Asparagine 119 carries an N-linked (GlcNAc...) asparagine glycan. The cysteines at positions 158 and 208 are disulfide-linked. Residues asparagine 251 and asparagine 296 are each glycosylated (N-linked (GlcNAc...) asparagine). A disulfide bridge connects residues cysteine 254 and cysteine 299. 8 Fibronectin type-III domains span residues 322 to 412 (PPTS…TGEQ), 417 to 511 (PPLH…TQQG), 515 to 604 (QPSS…TAQS), 609 to 706 (PPQD…TNED), 711 to 819 (PPRK…TTGA), 820 to 914 (VPGK…PEDV), 918 to 1013 (FPLN…TSPA), and 1014 to 1098 (FATS…TAPD). Residues 399–418 (GPPSEPVETRTGEQAPSSPP) form a disordered region. An N-linked (GlcNAc...) asparagine glycan is attached at asparagine 721. N-linked (GlcNAc...) asparagine glycans are attached at residues asparagine 963 and asparagine 966. The helical transmembrane segment at 1267–1287 (VMGPVLAVVLIIIIVIAILLF) threads the bilayer. The Cytoplasmic portion of the chain corresponds to 1288 to 1909 (KRKRASPLPK…YLGSFDHYAT (622 aa)). 2 Tyrosine-protein phosphatase domains span residues 1354 to 1609 (FSQE…LLEA) and 1641 to 1900 (MELE…ALEY). Substrate contacts are provided by residues aspartate 1518, 1550–1556 (CSAGVGR), and glutamine 1594. The Phosphocysteine intermediate role is filled by cysteine 1550. Cysteine 1841 acts as the Phosphocysteine intermediate in catalysis.

Belongs to the protein-tyrosine phosphatase family. Receptor class 2A subfamily.

It is found in the membrane. The enzyme catalyses O-phospho-L-tyrosyl-[protein] + H2O = L-tyrosyl-[protein] + phosphate. In terms of biological role, possible cell adhesion receptor. It possesses an intrinsic protein tyrosine phosphatase activity (PTPase). Its function is as follows. The first PTPase domain has enzymatic activity, while the second one seems to affect the substrate specificity of the first one. This Danio rerio (Zebrafish) protein is Receptor-type tyrosine-protein phosphatase F (ptprf).